A 482-amino-acid polypeptide reads, in one-letter code: Glutamyl-tRNA(Gln) amidotransferase subunit A (482 aa).

Active-site charge relay system residues include Lys-75 and Ser-150. Ser-174 serves as the catalytic Acyl-ester intermediate.

It belongs to the amidase family. GatA subfamily. As to quaternary structure, heterotrimer of A, B and C subunits.

It catalyses the reaction L-glutamyl-tRNA(Gln) + L-glutamine + ATP + H2O = L-glutaminyl-tRNA(Gln) + L-glutamate + ADP + phosphate + H(+). In terms of biological role, allows the formation of correctly charged Gln-tRNA(Gln) through the transamidation of misacylated Glu-tRNA(Gln) in organisms which lack glutaminyl-tRNA synthetase. The reaction takes place in the presence of glutamine and ATP through an activated gamma-phospho-Glu-tRNA(Gln). The polypeptide is Glutamyl-tRNA(Gln) amidotransferase subunit A (Deinococcus radiodurans (strain ATCC 13939 / DSM 20539 / JCM 16871 / CCUG 27074 / LMG 4051 / NBRC 15346 / NCIMB 9279 / VKM B-1422 / R1)).